The primary structure comprises 280 residues: Probable endonuclease 4 (280 aa).

Positions 77, 117, 148, 180, 183, 215, 228, 230, and 259 each coordinate Zn(2+).

This sequence belongs to the AP endonuclease 2 family. It depends on Zn(2+) as a cofactor.

It catalyses the reaction Endonucleolytic cleavage to 5'-phosphooligonucleotide end-products.. Its function is as follows. Endonuclease IV plays a role in DNA repair. It cleaves phosphodiester bonds at apurinic or apyrimidinic (AP) sites, generating a 3'-hydroxyl group and a 5'-terminal sugar phosphate. This is Probable endonuclease 4 from Thermoplasma volcanium (strain ATCC 51530 / DSM 4299 / JCM 9571 / NBRC 15438 / GSS1).